Here is a 223-residue protein sequence, read N- to C-terminus: Peptidyl-tRNA hydrolase (223 aa).

Tyr14 is a binding site for tRNA. His19 functions as the Proton acceptor in the catalytic mechanism. Positions 64, 66, and 112 each coordinate tRNA. Residues 183 to 223 are disordered; sequence MNVRNTRPKPGKRQKGEGDGSTDPAPAAKEGKGPLPPTQKP.

Belongs to the PTH family. As to quaternary structure, monomer.

The protein resides in the cytoplasm. The enzyme catalyses an N-acyl-L-alpha-aminoacyl-tRNA + H2O = an N-acyl-L-amino acid + a tRNA + H(+). Hydrolyzes ribosome-free peptidyl-tRNAs (with 1 or more amino acids incorporated), which drop off the ribosome during protein synthesis, or as a result of ribosome stalling. In terms of biological role, catalyzes the release of premature peptidyl moieties from peptidyl-tRNA molecules trapped in stalled 50S ribosomal subunits, and thus maintains levels of free tRNAs and 50S ribosomes. The chain is Peptidyl-tRNA hydrolase from Sorangium cellulosum (strain So ce56) (Polyangium cellulosum (strain So ce56)).